The primary structure comprises 115 residues: 5-hydroxyisourate hydrolase (115 aa).

Residues 1 to 23 are disordered; it reads MSGLTTHILDQASGKPAAGVGVR. The substrate site is built by His-7, Arg-45, and Tyr-112.

This sequence belongs to the transthyretin family. 5-hydroxyisourate hydrolase subfamily. In terms of assembly, homotetramer.

It carries out the reaction 5-hydroxyisourate + H2O = 5-hydroxy-2-oxo-4-ureido-2,5-dihydro-1H-imidazole-5-carboxylate + H(+). In terms of biological role, catalyzes the hydrolysis of 5-hydroxyisourate (HIU) to 2-oxo-4-hydroxy-4-carboxy-5-ureidoimidazoline (OHCU). The protein is 5-hydroxyisourate hydrolase of Caulobacter vibrioides (strain ATCC 19089 / CIP 103742 / CB 15) (Caulobacter crescentus).